We begin with the raw amino-acid sequence, 447 residues long: Mitogen-activated protein kinase HOG1 (447 aa).

The region spanning 23–302 (YSDLNPVGMG…AADALAHPYL (280 aa)) is the Protein kinase domain. Residues 29–37 (VGMGAFGLV) and Lys52 contribute to the ATP site. The active-site Proton acceptor is Asp144. Thr174 is subject to Phosphothreonine. Residues 174 to 176 (TGY) carry the TXY motif. At Tyr176 the chain carries Phosphotyrosine. Residues 394–414 (LNEDGTPVSGSIAENSSNSAT) form a disordered region. The span at 401–414 (VSGSIAENSSNSAT) shows a compositional bias: polar residues.

This sequence belongs to the protein kinase superfamily. Ser/Thr protein kinase family. MAP kinase subfamily. HOG1 sub-subfamily. Mg(2+) is required as a cofactor. Dually phosphorylated on Thr-174 and Tyr-176, which activates the enzyme.

The protein resides in the cytoplasm. Its subcellular location is the nucleus. It carries out the reaction L-seryl-[protein] + ATP = O-phospho-L-seryl-[protein] + ADP + H(+). It catalyses the reaction L-threonyl-[protein] + ATP = O-phospho-L-threonyl-[protein] + ADP + H(+). With respect to regulation, activated by tyrosine and threonine phosphorylation. Functionally, proline-directed serine/threonine-protein kinase involved in a signal transduction pathway that is activated by changes in the osmolarity of the extracellular environment. Controls osmotic regulation of transcription of target genes. The chain is Mitogen-activated protein kinase HOG1 (HOG1) from Candida glabrata (strain ATCC 2001 / BCRC 20586 / JCM 3761 / NBRC 0622 / NRRL Y-65 / CBS 138) (Yeast).